Here is a 441-residue protein sequence, read N- to C-terminus: Protein translocase subunit SecY (441 aa).

Helical transmembrane passes span 25-45 (YFVIFSLIVFRMGSYIPIPGI), 78-98 (IFALGIMPFISSSIIVQILTL), 126-146 (LILAALQSFGMSISLPNIPGL), 155-175 (ISFYGIAIISLITGTIFLMWL), 184-204 (IGNGISIIIFSGIVSGLPSSF), 218-238 (VLLFCFIGIVIFLVTLLVVYI), 275-295 (VIPAIFASSIVLFPATIASWF), 318-338 (YILTYITAIIFFCFFYTGLAF), 376-396 (FLGSMYMAFICLVPELMRFFM), and 398-418 (VPFYFGGTSLLIIVVVIIDFI).

Belongs to the SecY/SEC61-alpha family. As to quaternary structure, component of the Sec protein translocase complex. Heterotrimer consisting of SecY, SecE and SecG subunits. The heterotrimers can form oligomers, although 1 heterotrimer is thought to be able to translocate proteins. Interacts with the ribosome. Interacts with SecDF, and other proteins may be involved. Interacts with SecA.

It is found in the cell membrane. Functionally, the central subunit of the protein translocation channel SecYEG. Consists of two halves formed by TMs 1-5 and 6-10. These two domains form a lateral gate at the front which open onto the bilayer between TMs 2 and 7, and are clamped together by SecE at the back. The channel is closed by both a pore ring composed of hydrophobic SecY resides and a short helix (helix 2A) on the extracellular side of the membrane which forms a plug. The plug probably moves laterally to allow the channel to open. The ring and the pore may move independently. This Buchnera aphidicola subsp. Baizongia pistaciae (strain Bp) protein is Protein translocase subunit SecY.